Here is a 118-residue protein sequence, read N- to C-terminus: Large ribosomal subunit protein bL20 (118 aa).

This sequence belongs to the bacterial ribosomal protein bL20 family.

In terms of biological role, binds directly to 23S ribosomal RNA and is necessary for the in vitro assembly process of the 50S ribosomal subunit. It is not involved in the protein synthesizing functions of that subunit. The protein is Large ribosomal subunit protein bL20 of Yersinia pseudotuberculosis serotype O:1b (strain IP 31758).